We begin with the raw amino-acid sequence, 87 residues long: Antitoxin YefM (87 aa).

It belongs to the phD/YefM antitoxin family. As to quaternary structure, forms a complex with YoeB which inhibits its toxin activity.

Antitoxin component of a type II toxin-antitoxin (TA) system. A probable antitoxin for the putative mRNA interferase YeoB. The sequence is that of Antitoxin YefM from Streptomyces coelicolor (strain ATCC BAA-471 / A3(2) / M145).